The following is a 150-amino-acid chain: Glycophorin-A (150 aa).

The N-terminal stretch at 1 to 19 (MYGKIIFVLLLSEIVSISA) is a signal peptide. Residues 20-91 (LSTTEVAMHT…QLAHHFSEPE (72 aa)) lie on the Extracellular side of the membrane. Residue serine 21 is glycosylated (O-linked (GalNAc...) serine). Threonine 22, threonine 23, and threonine 29 each carry an O-linked (GalNAc...) threonine glycan. Serine 30 is a glycosylation site (O-linked (GalNAc...) serine). O-linked (GalNAc...) threonine glycosylation occurs at threonine 31. An O-linked (GalNAc...) serine glycan is attached at serine 32. Threonine 36 carries an O-linked (GalNAc...) threonine glycan. Residues serine 38 and serine 41 are each glycosylated (O-linked (GalNAc...) serine). Threonine 44 carries O-linked (GalNAc...) threonine glycosylation. Asparagine 45 is a glycosylation site (N-linked (GlcNAc...) asparagine). O-linked (GalNAc...) threonine glycosylation is found at threonine 52 and threonine 56. 2 O-linked (GalNAc...) serine glycosylation sites follow: serine 63 and serine 66. Threonine 69 carries O-linked (GalNAc...) threonine glycosylation. The chain crosses the membrane as a helical span at residues 92–114 (ITLIIFGVMAGVIGTILLISYGI). Residues 115–150 (RRLIKKSPSDVKPLPSPDTDVPLSSVEIENPETSDQ) lie on the Cytoplasmic side of the membrane. The segment at 121–150 (SPSDVKPLPSPDTDVPLSSVEIENPETSDQ) is disordered. Threonine 133 is subject to Phosphothreonine. A phosphoserine mark is found at serine 138 and serine 148.

It belongs to the glycophorin A family. In terms of assembly, homodimer. Component of the ankyrin-1 complex in the erythrocyte, composed of ANK1, RHCE, RHAG, SLC4A1, EPB42, GYPA, GYPB and AQP1. Interacts with SLC4A1; a GYPA monomer is bound at each end of the SLC4A1 dimer forming a heterotetramer. As to quaternary structure, (Microbial infection) Interacts with Streptococcus gordonii hsa protein. (Microbial infection) Interacts (in a sialic acid-independent manner) with P.falciparum MSP1 subunit p83. Post-translationally, the major O-linked glycan are NeuAc-alpha-(2-3)-Gal-beta-(1-3)-[NeuAc-alpha-(2-6)]-GalNAcOH (about 78 %) and NeuAc-alpha-(2-3)-Gal-beta-(1-3)-GalNAcOH (17 %). Minor O-glycans (5 %) include NeuAc-alpha-(2-3)-Gal-beta-(1-3)-[NeuAc-alpha-(2-6)]-GalNAcOH NeuAc-alpha-(2-8)-NeuAc-alpha-(2-3)-Gal-beta-(1-3)-GalNAcOH. About 1% of all O-linked glycans carry blood group A, B and H determinants. They derive from a type-2 precursor core structure, Gal-beta-(1,3)-GlcNAc-beta-1-R, and the antigens are synthesized by addition of fucose (H antigen-specific) and then N-acetylgalactosamine (A antigen-specific) or galactose (B antigen-specific). Specifically O-linked-glycans are NeuAc-alpha-(2-3)-Gal-beta-(1-3)-GalNAcOH-(6-1)-GlcNAc-beta-(4-1)-[Fuc-alpha-(1-2)]-Gal-beta-(3-1)-GalNAc-alpha (about 1%, B antigen-specific) and NeuAc-alpha-(2-3)-Gal-beta-(1-3)-GalNAcOH-(6-1)-GlcNAc-beta-(4-1)-[Fuc-alpha-(1-2)]-Gal-beta (1 %, O antigen-, A antigen- and B antigen-specific).

It is found in the cell membrane. Its function is as follows. Component of the ankyrin-1 complex, a multiprotein complex involved in the stability and shape of the erythrocyte membrane. Glycophorin A is the major intrinsic membrane protein of the erythrocyte. The N-terminal glycosylated segment, which lies outside the erythrocyte membrane, has MN blood group receptors. Appears to be important for the function of SLC4A1 and is required for high activity of SLC4A1. May be involved in translocation of SLC4A1 to the plasma membrane. (Microbial infection) Appears to be a receptor for Hepatitis A virus (HAV). In terms of biological role, (Microbial infection) Receptor for P.falciparum erythrocyte-binding antigen 175 (EBA-175); binding of EBA-175 is dependent on sialic acid residues of the O-linked glycans. The protein is Glycophorin-A of Homo sapiens (Human).